A 309-amino-acid polypeptide reads, in one-letter code: Porphobilinogen deaminase (309 aa).

Position 241 is an S-(dipyrrolylmethanemethyl)cysteine (C241).

It belongs to the HMBS family. Monomer. The cofactor is dipyrromethane.

It catalyses the reaction 4 porphobilinogen + H2O = hydroxymethylbilane + 4 NH4(+). It functions in the pathway porphyrin-containing compound metabolism; protoporphyrin-IX biosynthesis; coproporphyrinogen-III from 5-aminolevulinate: step 2/4. Functionally, tetrapolymerization of the monopyrrole PBG into the hydroxymethylbilane pre-uroporphyrinogen in several discrete steps. The chain is Porphobilinogen deaminase from Geobacillus kaustophilus (strain HTA426).